The following is a 180-amino-acid chain: UPF0227 protein YcfP (180 aa).

Belongs to the UPF0227 family.

This Salmonella choleraesuis (strain SC-B67) protein is UPF0227 protein YcfP.